A 196-amino-acid polypeptide reads, in one-letter code: Large ribosomal subunit protein uL18 (196 aa).

This sequence belongs to the universal ribosomal protein uL18 family. In terms of assembly, part of the 50S ribosomal subunit. Contacts the 5S and 23S rRNAs.

In terms of biological role, this is one of the proteins that bind and probably mediate the attachment of the 5S RNA into the large ribosomal subunit, where it forms part of the central protuberance. The polypeptide is Large ribosomal subunit protein uL18 (Saccharolobus islandicus (strain L.S.2.15 / Lassen #1) (Sulfolobus islandicus)).